The following is an 87-amino-acid chain: U15-lycotoxin-Ls1f (87 aa).

A signal peptide spans 1–20 (MNSKIFAVLLLLGLLSCVLS). The WAP domain maps to 21-66 (DQYCPKSSITACKKMNIRNDCCKDDDCTGGSWCCATPCGNFCKYPT). 5 cysteine pairs are disulfide-bonded: Cys24/Cys54, Cys32/Cys58, Cys41/Cys53, Cys42/Cys80, and Cys47/Cys62.

Belongs to the venom protein 11 family. 01 (wap-1) subfamily. In terms of processing, contains 5 disulfide bonds. Expressed by the venom gland.

The protein localises to the secreted. Has antibacterial activity. In Lycosa singoriensis (Wolf spider), this protein is U15-lycotoxin-Ls1f.